The primary structure comprises 300 residues: UDP-N-acetylenolpyruvoylglucosamine reductase (300 aa).

Residues 27 to 192 (KVGGPADYLA…ISAKFALKPG (166 aa)) form the FAD-binding PCMH-type domain. Residue Arg-171 is part of the active site. Ser-221 serves as the catalytic Proton donor. Glu-291 is a catalytic residue.

It belongs to the MurB family. The cofactor is FAD.

It localises to the cytoplasm. It catalyses the reaction UDP-N-acetyl-alpha-D-muramate + NADP(+) = UDP-N-acetyl-3-O-(1-carboxyvinyl)-alpha-D-glucosamine + NADPH + H(+). It functions in the pathway cell wall biogenesis; peptidoglycan biosynthesis. Cell wall formation. This chain is UDP-N-acetylenolpyruvoylglucosamine reductase, found in Streptococcus agalactiae serotype Ia (strain ATCC 27591 / A909 / CDC SS700).